Consider the following 373-residue polypeptide: NAD(P)H-quinone oxidoreductase subunit 1 (373 aa).

8 helical membrane passes run 28 to 48, 98 to 118, 129 to 149, 167 to 187, 205 to 225, 267 to 287, 309 to 329, and 348 to 368; these read LLWL…GVLV, LLFT…WLII, VGVG…GLLM, AAQS…IVMM, ILSW…ICAL, VLSA…PIPV, SVGI…AILL, and FLLP…LAFP.

The protein belongs to the complex I subunit 1 family. NDH-1 is composed of at least 11 different subunits.

The protein resides in the cellular thylakoid membrane. The enzyme catalyses a plastoquinone + NADH + (n+1) H(+)(in) = a plastoquinol + NAD(+) + n H(+)(out). The catalysed reaction is a plastoquinone + NADPH + (n+1) H(+)(in) = a plastoquinol + NADP(+) + n H(+)(out). Functionally, NDH-1 shuttles electrons from an unknown electron donor, via FMN and iron-sulfur (Fe-S) centers, to quinones in the respiratory and/or the photosynthetic chain. The immediate electron acceptor for the enzyme in this species is believed to be plastoquinone. Couples the redox reaction to proton translocation, and thus conserves the redox energy in a proton gradient. This chain is NAD(P)H-quinone oxidoreductase subunit 1, found in Parasynechococcus marenigrum (strain WH8102).